Consider the following 993-residue polypeptide: UPF0182 protein MAP_3291c (993 aa).

7 consecutive transmembrane segments (helical) span residues 18–38 (ILILIALGVIALLLAGPRLID), 63–83 (FVVFLIAGLLVGGIVFAGLAV), 113–133 (LVSVGVPVAIGLLAGIIAQSY), 175–195 (FVAVFLAFVANLLAHYIFGGI), 210–230 (IQLVTLVGLLVLLKAVAYWLD), 254–274 (AVLPAKLILMAIALICAAAVF), and 287–307 (IGLVLLLLSSLIVGAGWPLIV). The disordered stretch occupies residues 903–941 (NIQPTEGGAPAASPPANAPAPAVTPGSAPPVAAPPVPDG). Residues 929–939 (SAPPVAAPPVP) are compositionally biased toward pro residues.

It belongs to the UPF0182 family.

It localises to the cell membrane. This chain is UPF0182 protein MAP_3291c, found in Mycolicibacterium paratuberculosis (strain ATCC BAA-968 / K-10) (Mycobacterium paratuberculosis).